The sequence spans 308 residues: Taste receptor type 2 member 41 (308 aa).

Topologically, residues 1-7 (MLPTLSV) are extracellular. A helical transmembrane segment spans residues 8 to 28 (FFMLTFVLLCFLGILANGFIV). Topologically, residues 29-60 (LMLSREWLLRGRLLPSDMILFSLGTSRFFQQC) are cytoplasmic. The chain crosses the membrane as a helical span at residues 61–81 (VGLVNSFYYFLHLVEYSGSLA). Residues 82 to 88 (RQLISLH) lie on the Extracellular side of the membrane. Residues 89 to 109 (WDFLNSATFWFCTWLSVLFCI) form a helical membrane-spanning segment. At 110–128 (KIANFSHPAFLWLKWRFPA) the chain is on the cytoplasmic side. Residues 129-149 (LVPWFLLGSILVSVIVTLLFF) traverse the membrane as a helical segment. Over 150–186 (WGNHTIYQAFLRRKFTGNTTFKEWNRRLEIDYFMPLK) the chain is Extracellular. 2 N-linked (GlcNAc...) asparagine glycosylation sites follow: Asn-152 and Asn-167. A helical transmembrane segment spans residues 187–207 (VVTMSIPCSLFLVSILLLISS). Topologically, residues 208–239 (LRRHSLRMQHNTHSLQDPNVQAHSRALKSLIS) are cytoplasmic. The chain crosses the membrane as a helical span at residues 240-260 (FLVLYAVSFVSMIIDATVFIS). Residues 261-264 (SDNV) lie on the Extracellular side of the membrane. The helical transmembrane segment at 265–285 (WYWPWQIILYFCMSVHPFILI) threads the bilayer. At 286 to 308 (TNNLRFRGTFRQLLLLARGFWVA) the chain is on the cytoplasmic side.

This sequence belongs to the G-protein coupled receptor T2R family. Expressed in subsets of taste receptor cells of the tongue and palate epithelium and exclusively in gustducin-positive cells.

The protein localises to the membrane. Receptor that may play a role in the perception of bitterness and is gustducin-linked. May play a role in sensing the chemical composition of the gastrointestinal content. The activity of this receptor may stimulate alpha gustducin, mediate PLC-beta-2 activation and lead to the gating of TRPM5. In Mus musculus (Mouse), this protein is Taste receptor type 2 member 41 (Tas2r41).